We begin with the raw amino-acid sequence, 675 residues long: PTS system glucose-specific EIICBA component (675 aa).

Residues 3–414 (KKFFGQLQRI…FNFKTPGRED (412 aa)) form the PTS EIIC type-1 domain. 11 helical membrane passes run 16 to 36 (LMLP…GNAF), 63 to 83 (AGGI…AIGL), 89 to 109 (VAAI…GMFL), 126 to 146 (VLGI…GALA), 170 to 190 (FVPI…AIIW), 199 to 219 (AFSE…FGFI), 273 to 293 (FMQG…LAIY), 303 to 323 (VVAG…ITEP), 329 to 349 (LFVA…SFLI), 355 to 375 (LHLG…GILP), and 383 to 403 (VIPV…FLIV). One can recognise a PTS EIIB type-1 domain in the interval 425 to 506 (SELPFKVLDA…QQIMDGKITS (82 aa)). Cys447 serves as the catalytic Phosphocysteine intermediate; for EIIB activity. The PTS EIIA type-1 domain occupies 547 to 651 (DKVFSEKMMG…STITPIVVTN (105 aa)). His599 (tele-phosphohistidine intermediate; for EIIA activity) is an active-site residue.

It is found in the cell membrane. The enzyme catalyses N(pros)-phospho-L-histidyl-[protein] + D-glucose(out) = D-glucose 6-phosphate(in) + L-histidyl-[protein]. With respect to regulation, inhibited by 2-deoxyglucose and methyl beta-D-glucoside, but not by methyl alpha-D-glucoside, p-nitrophenyl alpha-D-glucoside, o-nitrophenyl beta-D-glucoside and salicin. Functionally, the phosphoenolpyruvate-dependent sugar phosphotransferase system (sugar PTS), a major carbohydrate active transport system, catalyzes the phosphorylation of incoming sugar substrates concomitantly with their translocation across the cell membrane. This system is involved in glucose transport. Cannot transport galactose, fructose, mannose, cellobiose, sucrose, maltose, lactose, melibiose and trehalose, as well as N-acetylglucosamine. This chain is PTS system glucose-specific EIICBA component (ptsG), found in Staphylococcus carnosus (strain TM300).